Reading from the N-terminus, the 103-residue chain is MARLIFHFVFALILAAYLLSVTDAIPRGWQEPCFCPSKNPYCDCGDDLQVPTTSVISPKPIIEQCARCERNSQCNKVCPATCKYKVCIFNRTCEFSTCHCYRC.

An N-terminal signal peptide occupies residues 1-24 (MARLIFHFVFALILAAYLLSVTDA). 4 cysteine pairs are disulfide-bonded: Cys44-Cys103, Cys68-Cys87, Cys74-Cys98, and Cys78-Cys100.

It belongs to the DEFL family.

It localises to the secreted. The chain is Defensin-like protein 268 from Arabidopsis thaliana (Mouse-ear cress).